An 808-amino-acid polypeptide reads, in one-letter code: MIIHSSSSNSKKEYTMADDFITTIDSDDEVSNYGEPSALPKIKDDELDPDFQFDLGGGRSEGLDLWGGDEVQGVKKGNEPINVDDIIERKRGKPIRAFKDRKRKRDEDATSEDDLEEDEEEEGDSNDDSDAAKSGDSEEDEMDVDMSEGDGDEEDENEIESLKREDESDEEEEEEEDDYDEEGENEVVDSDSESEEETAAEIARKDAFFSSDPTTTDPTLPSSFTAMNLSRPLLRALTSLQFTAPTPIQARAIPLALLGRDILGSAVTGSGKTAAFMVPILERLCYRDRGKGGAACRVLVLCPTRELAVQCEAVGKALAEKGGLDVRFALLVGGLSLNAQAHTLRTLPDILIATPGRLIDHLTNTPSFTLSALDVLVIDEADRMLEAGFTDELEEIIKACPRSRQTMLFSATMTDSVDELVKLSLDKPIRVFVDPKRNTARGLTQEFVRIRSDDSRSPSLLALCKRTIREKCIIFFRSKALAHQMRIVFGLFGLKAAELHGNLTQEQRLQALNDFKAGTVDYLLATDLASRGLDIKGVETVINYDMPGQLAQYTHRVGRTARAGRKGRSVSLVGEADRKMLKAAIKQAEADQVRHRIIPSEAVTAMKEKLEEFKDDIQEILKEEKEEKLLRQADMEIKKGQNMVEHEAEIFSRPARTWFQSGKEKQASKSAGKDAYVGSFPSTGKSAEKEKEKLKRGKYDGLSRRLKRRKMAIEEDAADAAAARKTEMGIRAAKKNALPKKITEPQPRLEKAGKGKDKKKGKARRVTGGKGSAFDSEGKKSHEGMRAKPAKVNLEKGKKKGGKGKGRK.

2 disordered regions span residues 27-46 (DDEVSNYGEPSALPKIKDDE) and 64-223 (DLWG…LPSS). A compositionally biased stretch (basic residues) spans 90-104 (KRGKPIRAFKDRKRK). Composition is skewed to acidic residues over residues 109 to 129 (ATSEDDLEEDEEEEGDSNDDS), 137 to 159 (SEEDEMDVDMSEGDGDEEDENEI), and 167 to 199 (ESDEEEEEEEDDYDEEGENEVVDSDSESEEETA). Low complexity predominate over residues 208–223 (FFSSDPTTTDPTLPSS). The short motif at 222-250 (SSFTAMNLSRPLLRALTSLQFTAPTPIQA) is the Q motif element. Positions 253 to 431 (IPLALLGRDI…KLSLDKPIRV (179 aa)) constitute a Helicase ATP-binding domain. ATP is bound at residue 266-273 (AVTGSGKT). The DEAD box motif lies at 379 to 382 (DEAD). The Helicase C-terminal domain occupies 442 to 621 (GLTQEFVRIR…EFKDDIQEIL (180 aa)). A coiled-coil region spans residues 575–645 (EADRKMLKAA…EIKKGQNMVE (71 aa)). The segment at 661-808 (SGKEKQASKS…KKGGKGKGRK (148 aa)) is disordered. 2 stretches are compositionally biased toward basic and acidic residues: residues 686-703 (SAEKEKEKLKRGKYDGLS) and 741-755 (KITEPQPRLEKAGKG). Positions 756-767 (KDKKKGKARRVT) are enriched in basic residues. Residues 776–786 (SEGKKSHEGMR) are compositionally biased toward basic and acidic residues. A compositionally biased stretch (basic residues) spans 797–808 (GKKKGGKGKGRK).

It belongs to the DEAD box helicase family. DDX27/DRS1 subfamily. As to quaternary structure, associates with pre-ribosomal particles.

It localises to the nucleus. The protein localises to the nucleolus. It catalyses the reaction ATP + H2O = ADP + phosphate + H(+). In terms of biological role, ATP-binding RNA helicase involved in ribosome assembly. This chain is ATP-dependent RNA helicase DRS1 (DRS1), found in Cryptococcus neoformans var. neoformans serotype D (strain B-3501A) (Filobasidiella neoformans).